The chain runs to 331 residues: Ferredoxin--NADP reductase 2 (331 aa).

Positions 37, 45, 50, 90, 124, 286, and 327 each coordinate FAD.

The protein belongs to the ferredoxin--NADP reductase type 2 family. As to quaternary structure, homodimer. FAD serves as cofactor.

It carries out the reaction 2 reduced [2Fe-2S]-[ferredoxin] + NADP(+) + H(+) = 2 oxidized [2Fe-2S]-[ferredoxin] + NADPH. The polypeptide is Ferredoxin--NADP reductase 2 (Listeria innocua serovar 6a (strain ATCC BAA-680 / CLIP 11262)).